Reading from the N-terminus, the 355-residue chain is Iron deficiency-induced protein A (355 aa).

Positions 1–34 (MEKVGRRVFLGMGAAATAYVTHHLWNQNAESSYA) form a signal peptide, tat-type signal. Fe cation contacts are provided by His49, Tyr50, Tyr180, Tyr236, and Tyr237.

It belongs to the bacterial solute-binding protein 1 family. Predicted to be exported by the Tat system. The position of the signal peptide cleavage has not been experimentally proven.

It is found in the cellular thylakoid membrane. Its function is as follows. Plays an important role in protecting the acceptor side of photosystem II (PSII) against oxidative damage, especially under iron-limiting growth conditions. In terms of biological role, may also be part of a periplasmic ABC transporter complex involved in iron import. The chain is Iron deficiency-induced protein A (idiA) from Thermosynechococcus vestitus (strain NIES-2133 / IAM M-273 / BP-1).